Here is an 84-residue protein sequence, read N- to C-terminus: Large ribosomal subunit protein bL27 (84 aa).

Positions 1–21 are disordered; that stretch reads MAHKKGGGSTKNGRDSNPKYL.

Belongs to the bacterial ribosomal protein bL27 family.

This chain is Large ribosomal subunit protein bL27, found in Chlorobium phaeovibrioides (strain DSM 265 / 1930) (Prosthecochloris vibrioformis (strain DSM 265)).